A 492-amino-acid chain; its full sequence is Adenosylhomocysteinase (492 aa).

Substrate is bound by residues threonine 68, aspartate 153, and glutamate 215. 216 to 218 (TTT) is a binding site for NAD(+). Residues lysine 245 and aspartate 249 each contribute to the substrate site. NAD(+)-binding positions include asparagine 250, 279–284 (GYGDVG), glutamate 302, asparagine 337, 358–360 (IGH), and asparagine 406.

The protein belongs to the adenosylhomocysteinase family. NAD(+) serves as cofactor.

The protein resides in the cytoplasm. The enzyme catalyses S-adenosyl-L-homocysteine + H2O = L-homocysteine + adenosine. It participates in amino-acid biosynthesis; L-homocysteine biosynthesis; L-homocysteine from S-adenosyl-L-homocysteine: step 1/1. Functionally, may play a key role in the regulation of the intracellular concentration of adenosylhomocysteine. In Mycobacterium leprae (strain Br4923), this protein is Adenosylhomocysteinase.